Consider the following 384-residue polypeptide: F-box only protein 5 (384 aa).

The disordered stretch occupies residues 25–67 (EVKGHKVSPRKTGALSLRSPAATNVSTPLESRSKGPHNKENYQ). Positions 45–54 (AATNVSTPLE) are enriched in polar residues. The span at 55-67 (SRSKGPHNKENYQ) shows a compositional bias: basic and acidic residues. The F-box domain maps to 187 to 234 (CKLMRKDMRHILARILGLLGDCDLISCTKVSRTWRKIICQDQLALQRW). A ZBR-type zinc finger spans residues 311 to 359 (SLRRCSRCSSPARFDAVMQRAVCTRISCAFEFCTLCQSAFHDSTPCRNT). Residues cysteine 315, cysteine 318, cysteine 333, cysteine 338, cysteine 343, cysteine 346, histidine 351, and cysteine 356 each contribute to the Zn(2+) site.

In terms of assembly, part of a SCF (SKP1-cullin-F-box) protein ligase complex.

The protein resides in the nucleus. It localises to the cytoplasm. It functions in the pathway protein modification; protein ubiquitination. Its function is as follows. During embryonic development, regulates the integrity of the genome and therefore the cell cycle progression by preventing rereplication through an APC-Cdh1-dependent mechanism. This Danio rerio (Zebrafish) protein is F-box only protein 5.